The primary structure comprises 121 residues: Small ribosomal subunit protein uS13 (121 aa).

The interval His-91–Lys-121 is disordered. Positions Ala-106–Lys-121 are enriched in basic residues.

It belongs to the universal ribosomal protein uS13 family. As to quaternary structure, part of the 30S ribosomal subunit. Forms a loose heterodimer with protein S19. Forms two bridges to the 50S subunit in the 70S ribosome.

Functionally, located at the top of the head of the 30S subunit, it contacts several helices of the 16S rRNA. In the 70S ribosome it contacts the 23S rRNA (bridge B1a) and protein L5 of the 50S subunit (bridge B1b), connecting the 2 subunits; these bridges are implicated in subunit movement. Contacts the tRNAs in the A and P-sites. The chain is Small ribosomal subunit protein uS13 from Listeria monocytogenes serotype 4b (strain CLIP80459).